The following is a 67-amino-acid chain: Alpha-conotoxin G1.5 (67 aa).

A signal peptide spans 1–21; that stretch reads MGMRMMFTVFLLVALATTVVS. A propeptide spanning residues 22-47 is cleaved from the precursor; the sequence is FTSDRASDRRNAAVKAFDLISSTVKK. Cystine bridges form between C49–C55 and C50–C63. Position 65 is a glutamine amide (Q65).

The protein belongs to the conotoxin A superfamily. Expressed by the venom duct.

Its subcellular location is the secreted. In terms of biological role, alpha-conotoxins act on postsynaptic membranes, they bind to the nicotinic acetylcholine receptors (nAChR) and thus inhibit them. Globular isomer (C1-C3; C2-C4) selectively inhibits neuronal (non-muscle) nAChR subtypes particularly human alpha-3-beta-2/CHRNA3-CHRNB2 (IC(50)=35.7 nM) and alpha-9-alpha-10/CHRNA9-CHRNA10 nAChRs (IC(50)=569 nM), while the ribbon isomer (C1-C4; C2-C3) shows weak inhibition on alpha-3-beta-2/CHRNA3-CHRNB2, but not on all other receptors tested. The polypeptide is Alpha-conotoxin G1.5 (Conus geographus (Geography cone)).